Here is an 88-residue protein sequence, read N- to C-terminus: Beta-insect excitatory toxin 1 (88 aa).

Positions methionine 1 to glycine 18 are cleaved as a signal peptide. The 64-residue stretch at lysine 20 to aspartate 83 folds into the LCN-type CS-alpha/beta domain. Cystine bridges form between cysteine 34/cysteine 55, cysteine 40/cysteine 60, cysteine 44/cysteine 62, and cysteine 56/cysteine 82.

It belongs to the long (4 C-C) scorpion toxin superfamily. Sodium channel inhibitor family. Beta subfamily. In terms of tissue distribution, expressed by the venom gland.

Its subcellular location is the secreted. In terms of biological role, excitatory insect beta-toxins induce a spastic paralysis. They bind voltage-independently at site-4 of sodium channels (Nav) and shift the voltage of activation toward more negative potentials thereby affecting sodium channel activation and promoting spontaneous and repetitive firing. This toxin is active only on insects. The polypeptide is Beta-insect excitatory toxin 1 (Androctonus australis (Sahara scorpion)).